The following is a 1378-amino-acid chain: Protein CLASP-1 (1378 aa).

Residues 168–206 (LIPQLCRLTNDPNSEVRDVSTQCLIDLMVYGGKPIVAKI) form an HEAT 1 repeat. Disordered stretches follow at residues 231–254 (RGDL…RNSL), 266–325 (IHPS…TRSS), and 590–725 (MLRD…HQTP). 2 stretches are compositionally biased toward low complexity: residues 269 to 283 (SAST…RLST) and 610 to 619 (NQKQQPNQQN). Composition is skewed to polar residues over residues 620-630 (ISQKFLSQRSA) and 637-648 (IQLSVKPQTTAI). Residues 664-676 (SSTSTSFSAVRSS) are compositionally biased toward low complexity. Over residues 677–690 (GYGQNQSTTPNRAK) the composition is skewed to polar residues. Low complexity predominate over residues 704 to 721 (TNGNNNNKSSSSSPSTST). The stretch at 740 to 767 (ASLTQEQANCLQNAMNTAKDEMSKNNED) forms a coiled coil. Residues 775–784 (IRKTPPKEVP) are compositionally biased toward basic and acidic residues. The tract at residues 775–823 (IRKTPPKEVPRSYNNSPFKPSNLDSSVHRSYNNNSPFRPSSGSVGSGSN) is disordered. The segment covering 786–812 (SYNNSPFKPSNLDSSVHRSYNNNSPFR) has biased composition (polar residues). An HEAT 2 repeat occupies 1305–1341 (HLIVNDVAPCFVTAYESMSSTVRKCAVFGLVALVQRV).

Belongs to the CLASP family.

The protein resides in the cytoplasm. The protein localises to the cytoskeleton. Microtubule plus-end tracking protein that promotes the stabilization of dynamic microtubules. Operates redundantly with cls-2 and cls-3 in regulating microtubule processes which position the spindle during asymmetric cell division. In Caenorhabditis elegans, this protein is Protein CLASP-1 (cls-1).